The following is a 335-amino-acid chain: Glycerol-3-phosphate dehydrogenase [NAD(P)+] (335 aa).

The NADPH site is built by Ser10, Phe11, Arg31, and Lys105. 3 residues coordinate sn-glycerol 3-phosphate: Lys105, Gly136, and Ser138. Ala140 contacts NADPH. 5 residues coordinate sn-glycerol 3-phosphate: Lys191, Asp244, Ser254, Arg255, and Asn256. Lys191 serves as the catalytic Proton acceptor. An NADPH-binding site is contributed by Arg255. Positions 279 and 281 each coordinate NADPH.

Belongs to the NAD-dependent glycerol-3-phosphate dehydrogenase family.

It localises to the cytoplasm. The enzyme catalyses sn-glycerol 3-phosphate + NAD(+) = dihydroxyacetone phosphate + NADH + H(+). It catalyses the reaction sn-glycerol 3-phosphate + NADP(+) = dihydroxyacetone phosphate + NADPH + H(+). Its pathway is membrane lipid metabolism; glycerophospholipid metabolism. Its function is as follows. Catalyzes the reduction of the glycolytic intermediate dihydroxyacetone phosphate (DHAP) to sn-glycerol 3-phosphate (G3P), the key precursor for phospholipid synthesis. In Leptospira borgpetersenii serovar Hardjo-bovis (strain L550), this protein is Glycerol-3-phosphate dehydrogenase [NAD(P)+].